Reading from the N-terminus, the 322-residue chain is Transaldolase (322 aa).

The active-site Schiff-base intermediate with substrate is the Lys-136.

Belongs to the transaldolase family. Type 1 subfamily. In terms of assembly, homodimer.

It is found in the cytoplasm. It catalyses the reaction D-sedoheptulose 7-phosphate + D-glyceraldehyde 3-phosphate = D-erythrose 4-phosphate + beta-D-fructose 6-phosphate. It participates in carbohydrate degradation; pentose phosphate pathway; D-glyceraldehyde 3-phosphate and beta-D-fructose 6-phosphate from D-ribose 5-phosphate and D-xylulose 5-phosphate (non-oxidative stage): step 2/3. Transaldolase is important for the balance of metabolites in the pentose-phosphate pathway. The protein is Transaldolase of Xanthomonas oryzae pv. oryzae (strain KACC10331 / KXO85).